The following is a 508-amino-acid chain: Amphoterin-induced protein 3 (508 aa).

Positions 1 to 19 (MAWLVLLGLLLCMLGAGSG) are cleaved as a signal peptide. The Extracellular segment spans residues 20–383 (TSDLEGVLPP…PRPEPEAFNT (364 aa)). The 37-residue stretch at 25–61 (GVLPPDPHNCPNKCVCAADVLSCAGRGLQDLPAALPA) folds into the LRRNT domain. 2 disulfide bridges follow: C34–C40 and C38–C47. LRR repeat units lie at residues 62 to 83 (TAAE…WLAP), 86 to 107 (RLRA…VFTN), 110 to 131 (GLRI…DLDG), 134 to 155 (ELEK…AFQG), 158 to 178 (MLSH…NHLH), and 184 to 207 (RLRT…AALP). N107 carries an N-linked (GlcNAc...) asparagine glycan. An LRRCT domain is found at 219 to 275 (NPLPCDCSLYHLLRRWHQRGLSALHDFEREYTCLAFKVAESRVRFFEHSRVFKNCSV). Intrachain disulfides connect C223/C251, C225/C273, and C300/C352. N-linked (GlcNAc...) asparagine glycosylation is found at N272, N301, N362, and N368. The 92-residue stretch at 279–370 (PGLELPEEEL…HNQTLEYNVS (92 aa)) folds into the Ig-like C2-type domain. The helical transmembrane segment at 384–404 (GFTTLLGCIVGLVLVLLYLFA) threads the bilayer. The Cytoplasmic segment spans residues 405-508 (PPCRGCCRCC…STGSEGLMMS (104 aa)).

It belongs to the immunoglobulin superfamily. AMIGO family. In terms of assembly, binds AMIGO1 or AMIGO2.

It localises to the membrane. May mediate heterophilic cell-cell interaction. May contribute to signal transduction through its intracellular domain. The protein is Amphoterin-induced protein 3 of Rattus norvegicus (Rat).